Reading from the N-terminus, the 677-residue chain is Galactocerebrosidase (677 aa).

A signal peptide spans 1-33 (MGTVPAGSRRAPGCGEGMFILCLALLLAPGAPA). The substrate site is built by threonine 101, tryptophan 143, and asparagine 189. Glutamate 190 serves as the catalytic Proton donor/acceptor. Glutamate 265 acts as the Nucleophile in catalysis. Cysteine 278 and cysteine 385 are oxidised to a cystine. N-linked (GlcNAc...) asparagine glycosylation is found at asparagine 291, asparagine 370, and asparagine 381. Arginine 387 serves as a coordination point for substrate. 7 N-linked (GlcNAc...) asparagine glycosylation sites follow: asparagine 394, asparagine 399, asparagine 424, asparagine 441, asparagine 509, asparagine 549, and asparagine 630.

It belongs to the glycosyl hydrolase 59 family.

The protein resides in the lysosome. The enzyme catalyses a beta-D-galactosyl-(1&lt;-&gt;1')-N-acylsphing-4-enine + H2O = an N-acylsphing-4-enine + D-galactose. The catalysed reaction is beta-D-galactosyl-(1&lt;-&gt;1)-sphing-4-enine + H2O = sphing-4-enine + D-galactose. It carries out the reaction a D-galactosylceramide + H2O = an N-acyl-sphingoid base + D-galactose. Functionally, hydrolyzes the galactose ester bonds of glycolipids such as galactosylceramide and galactosylsphingosine. This chain is Galactocerebrosidase, found in Xenopus laevis (African clawed frog).